Here is a 266-residue protein sequence, read N- to C-terminus: Type III pantothenate kinase (266 aa).

9–16 (DAGNSRIK) provides a ligand contact to ATP. Substrate contacts are provided by residues Tyr96 and 103-106 (GSDR). Residue Asp105 is the Proton acceptor of the active site. An ATP-binding site is contributed by Thr129. A substrate-binding site is contributed by Thr189.

This sequence belongs to the type III pantothenate kinase family. Homodimer. NH4(+) is required as a cofactor. The cofactor is K(+).

The protein resides in the cytoplasm. It catalyses the reaction (R)-pantothenate + ATP = (R)-4'-phosphopantothenate + ADP + H(+). The protein operates within cofactor biosynthesis; coenzyme A biosynthesis; CoA from (R)-pantothenate: step 1/5. In terms of biological role, catalyzes the phosphorylation of pantothenate (Pan), the first step in CoA biosynthesis. This is Type III pantothenate kinase from Burkholderia lata (strain ATCC 17760 / DSM 23089 / LMG 22485 / NCIMB 9086 / R18194 / 383).